The following is a 129-amino-acid chain: UPF0212 protein MA_1372 (129 aa).

Belongs to the UPF0212 family.

In Methanosarcina acetivorans (strain ATCC 35395 / DSM 2834 / JCM 12185 / C2A), this protein is UPF0212 protein MA_1372.